We begin with the raw amino-acid sequence, 149 residues long: Transcription antitermination protein NusB (149 aa).

The protein belongs to the NusB family.

Functionally, involved in transcription antitermination. Required for transcription of ribosomal RNA (rRNA) genes. Binds specifically to the boxA antiterminator sequence of the ribosomal RNA (rrn) operons. This Sphingopyxis alaskensis (strain DSM 13593 / LMG 18877 / RB2256) (Sphingomonas alaskensis) protein is Transcription antitermination protein NusB.